The sequence spans 332 residues: Homoserine kinase (332 aa).

Belongs to the pseudomonas-type ThrB family.

The enzyme catalyses L-homoserine + ATP = O-phospho-L-homoserine + ADP + H(+). It participates in amino-acid biosynthesis; L-threonine biosynthesis; L-threonine from L-aspartate: step 4/5. The polypeptide is Homoserine kinase (Burkholderia multivorans (strain ATCC 17616 / 249)).